The chain runs to 161 residues: Allophycocyanin beta chain (161 aa).

The residue at position 71 (Asn71) is an N4-methylasparagine. Cys81 contacts (2R,3E)-phycocyanobilin.

This sequence belongs to the phycobiliprotein family. As to quaternary structure, heterodimer of an alpha and a beta chain. Contains one covalently linked phycocyanobilin chromophore.

It localises to the cellular thylakoid membrane. In terms of biological role, light-harvesting photosynthetic bile pigment-protein from the phycobiliprotein complex. Allophycocyanin has a maximum absorption at approximately 650 nanometers. The polypeptide is Allophycocyanin beta chain (apcB) (Synechocystis sp. (strain PCC 6714) (Aphanocapsa sp. (strain PCC 6714))).